Consider the following 408-residue polypeptide: Peptidase T (408 aa).

Residue H78 participates in Zn(2+) binding. Residue D80 is part of the active site. D140 is a binding site for Zn(2+). E173 acts as the Proton acceptor in catalysis. Positions 174, 196, and 379 each coordinate Zn(2+).

The protein belongs to the peptidase M20B family. Zn(2+) serves as cofactor.

The protein localises to the cytoplasm. It catalyses the reaction Release of the N-terminal residue from a tripeptide.. Its function is as follows. Cleaves the N-terminal amino acid of tripeptides. This chain is Peptidase T, found in Citrobacter koseri (strain ATCC BAA-895 / CDC 4225-83 / SGSC4696).